The chain runs to 547 residues: MGSIPSEKETIFRSKLPDIYVPDHLPLHSYCFQNLHQFSDRPCLIDGFTNKTLTYAEVELASKRVGAGLHRLGLRQGHVVMLLLPNSIEFVLSFIGASLLGAMSTTANPFYTSAEIHKQAAAAGAKIIVTESCHVSKLQGLEGISRIVVIDDAVRVPENVMHFSELESTDEAELPRIDVHPDDVVALPYSSGTTGLPKGVMLTHNGLVTSVAQQVDGENPNLHFSEDDVLLCVLPLFHIYSLNSVLLCGLRAGAAIVLMRKFEIVRLMELVEKYRVTIAPFVPPIVVEMVKNEAVDRYDLSSIRVVMSGAAPMGKELENKLREKLPNAKLGQGYGMTEAGPVLSMCLAFAKEPFEVKSGSCGTVVRNAELKIIDPETGFSLSRNQPGEICIRGNQIMKGYLNNPEATKQTIDEEGWLHTGDIGFVDDDDEIFIVDRLKELIKYKGFQVAPAELEAMLITHPNMADAAVVSIKDDSCGELPVAFIVRSNGSEITEDEIKKYISKQVVFYKRIHRVFFIEAIPKAPSGKILRKELRARLAAECPNGRQL.

ATP contacts are provided by residues Ser190 to Thr194, His238, Ala310 to Pro312, Gln332 to Gly333, Thr337, Asp421, Arg436, and Lys527. The interval Glu263–Gln332 is SBD1. The tract at residues Gly333–Tyr400 is SBD2.

Belongs to the ATP-dependent AMP-binding enzyme family. As to expression, mostly expressed in stems, and, to a lower extent, in bulbs.

The catalysed reaction is (E)-4-coumarate + ATP + CoA = (E)-4-coumaroyl-CoA + AMP + diphosphate. It functions in the pathway phytoalexin biosynthesis; 3,4',5-trihydroxystilbene biosynthesis; 3,4',5-trihydroxystilbene from trans-4-coumarate: step 1/2. In terms of biological role, produces CoA thioesters of a variety of hydroxy- and methoxy-substituted cinnamic acids, which are used to synthesize several phenylpropanoid-derived compounds, including anthocyanins, flavonoids, isoflavonoids, coumarins, lignin, suberin and wall-bound phenolics. The protein is 4-coumarate-CoA ligase 1 of Narcissus pseudonarcissus (Daffodil).